Reading from the N-terminus, the 350-residue chain is Protein RecA (350 aa).

65–72 provides a ligand contact to ATP; it reads GPESSGKT. The disordered stretch occupies residues 329–350; the sequence is ASPDVKANPVKETEDDMADADI. Over residues 341 to 350 the composition is skewed to acidic residues; it reads TEDDMADADI.

Belongs to the RecA family.

Its subcellular location is the cytoplasm. In terms of biological role, can catalyze the hydrolysis of ATP in the presence of single-stranded DNA, the ATP-dependent uptake of single-stranded DNA by duplex DNA, and the ATP-dependent hybridization of homologous single-stranded DNAs. It interacts with LexA causing its activation and leading to its autocatalytic cleavage. The sequence is that of Protein RecA from Pseudomonas fluorescens (strain ATCC BAA-477 / NRRL B-23932 / Pf-5).